Consider the following 213-residue polypeptide: Glycerol-3-phosphate acyltransferase (213 aa).

6 helical membrane-spanning segments follow: residues 3-23 (IIILLLIASYLLGAIPFGLWI), 48-68 (ILGVKAGIAVFIFDLLKGTLA), 71-91 (LPLIFHINGVSPLIFGLLAVI), 119-139 (PFFLLYLLVIFILVLWLFSMI), 144-164 (VVAAIFALLGILIFPSFGFIL), and 165-185 (TSYDLLFSIIIFALAIIIIFR).

The protein belongs to the PlsY family. In terms of assembly, probably interacts with PlsX.

Its subcellular location is the cell membrane. It catalyses the reaction an acyl phosphate + sn-glycerol 3-phosphate = a 1-acyl-sn-glycero-3-phosphate + phosphate. It functions in the pathway lipid metabolism; phospholipid metabolism. Functionally, catalyzes the transfer of an acyl group from acyl-phosphate (acyl-PO(4)) to glycerol-3-phosphate (G3P) to form lysophosphatidic acid (LPA). This enzyme utilizes acyl-phosphate as fatty acyl donor, but not acyl-CoA or acyl-ACP. In Lactococcus lactis subsp. cremoris (strain MG1363), this protein is Glycerol-3-phosphate acyltransferase.